The following is a 339-amino-acid chain: Caspase drICE (339 aa).

A propeptide spanning residues 1–28 (MDATNNGESADQVGIRVGNPEQPNDHTD) is cleaved from the precursor. The tract at residues 1–45 (MDATNNGESADQVGIRVGNPEQPNDHTDALGSVGSGGAGSSGLVA) is disordered. Catalysis depends on residues His169 and Cys211. A propeptide spanning residues 218–230 (GGVTMQRSQTETD) is cleaved from the precursor.

Belongs to the peptidase C14A family. As to quaternary structure, heterotetramer that consists of two anti-parallel arranged heterodimers, each one formed by a 21 kDa (p21) and a 12 kDa (p12) subunit. Inactive pro-form can homodimerize. Dronc and Drice can form a stable complex. Interacts with Diap2 (via BIR3 domain) to form a stable complex. May interact with some isoforms of Dark.

With respect to regulation, zymogen activated by proteolytic cleavage; cleaved by the initiator caspase Dronc upon apoptosis induction. Functionally, involved in the activation cascade of caspases responsible for apoptosis execution. Acts downstream of rpr. Cleaves baculovirus p35 and lamin DmO in vitro. This Drosophila melanogaster (Fruit fly) protein is Caspase drICE (Drice).